Here is a 245-residue protein sequence, read N- to C-terminus: Eukaryotic translation initiation factor 6 (245 aa).

Tyr113 is modified (phosphotyrosine). At Thr165 the chain carries Phosphothreonine. Position 166 is a phosphoserine (Ser166). Residues Ser174 and Ser175 each carry the phosphoserine; by CK1 modification. Ser235 carries the post-translational modification Phosphoserine; by PKC. 2 positions are modified to phosphoserine: Ser239 and Ser243.

The protein belongs to the eIF-6 family. As to quaternary structure, monomer. Associates with the 60S ribosomal subunit. Interacts with RACK1. Interacts with DICER1, AGO2, TARBP2, MOV10 and RPL7A; they form a large RNA-induced silencing complex (RISC). Post-translationally, phosphorylation at Ser-174 and Ser-175 by CSNK1D/CK1 promotes nuclear export. In terms of processing, ufmylated by UFL1.

The protein resides in the cytoplasm. The protein localises to the nucleus. Its subcellular location is the nucleolus. Binds to the 60S ribosomal subunit and prevents its association with the 40S ribosomal subunit to form the 80S initiation complex in the cytoplasm. Behaves as a stimulatory translation initiation factor downstream insulin/growth factors. Is also involved in ribosome biogenesis. Associates with pre-60S subunits in the nucleus and is involved in its nuclear export. Cytoplasmic release of TIF6 from 60S subunits and nuclear relocalization is promoted by a RACK1 (RACK1)-dependent protein kinase C activity. In tissues responsive to insulin, controls fatty acid synthesis and glycolysis by exerting translational control of adipogenic transcription factors such as CEBPB, CEBPD and ATF4 that have G/C rich or uORF in their 5'UTR. Required for ROS-dependent megakaryocyte maturation and platelets formation, controls the expression of mitochondrial respiratory chain genes involved in reactive oxygen species (ROS) synthesis. Involved in miRNA-mediated gene silencing by the RNA-induced silencing complex (RISC). Required for both miRNA-mediated translational repression and miRNA-mediated cleavage of complementary mRNAs by RISC. Modulates cell cycle progression and global translation of pre-B cells, its activation seems to be rate-limiting in tumorigenesis and tumor growth. The chain is Eukaryotic translation initiation factor 6 (Eif6) from Rattus norvegicus (Rat).